The chain runs to 188 residues: Large ribosomal subunit protein bL35m (188 aa).

This sequence belongs to the bacterial ribosomal protein bL35 family.

The protein localises to the mitochondrion. This chain is Large ribosomal subunit protein bL35m (MRPL35), found in Pongo abelii (Sumatran orangutan).